The chain runs to 147 residues: MKCGKPVDYRYGEHTADVLIQAYGCTLEEAFKNAAIALAELTYHTEKVEPRYAKEITIDYNDLEGLLFRWIDELLFLFDTEKFAISREIVLNLGKNDVYYIKAVLYGEPYDIEKHGFTGLIVKAMTFHMMEIRQIDDYWMLQYVVDV.

The Ca(2+) site is built by D17, D146, and V147.

Belongs to the archease family.

Functionally, activates the tRNA-splicing ligase complex by facilitating the enzymatic turnover of catalytic subunit RtcB. Acts by promoting the guanylylation of RtcB, a key intermediate step in tRNA ligation. Can also alter the NTP specificity of RtcB such that ATP, dGTP or ITP is used efficiently. This is Protein archease from Pyrobaculum islandicum (strain DSM 4184 / JCM 9189 / GEO3).